Reading from the N-terminus, the 79-residue chain is Neurotoxin ShK-like1 (79 aa).

An N-terminal signal peptide occupies residues 1-25 (MSRKLLAVLMVCTFFLIAASMGTNA). The propeptide occupies 26–35 (LPFHEGIERR). One can recognise a ShKT domain in the interval 39–78 (CVDKMPFVCMRKDIPAICKNRNHRSYAFIMDVCRKTCGQC). Intrachain disulfides connect C39-C78, C47-C71, and C56-C75.

As to expression, expressed in nematocytes (in planulae and primary polyps). Is localized predominantly in the body column nematocytes and not in the tentacles (in primary polyps).

Its subcellular location is the nematocyst. The protein localises to the secreted. Neurotoxin. In vivo, induces contraction paralysis followed by death (within 2 hours) on zebrafish larvae. Also induces body contraction in Nematostella 11-dpf polyps. The chain is Neurotoxin ShK-like1 from Nematostella vectensis (Starlet sea anemone).